A 275-amino-acid polypeptide reads, in one-letter code: MKKYKMVINIDMLRLFLPLLGGSVSGSLFGRFLGSEGSAIMITTCVSFCALVVFIFGLFYFRKKGPLKRILYLFLVGFVLSLIRIKVVYLLGGQALPLLDPILMYAVGAGALLGPNGAESSATWEEDSFELDVLGESFSSSKTDMDSQVAEAPQTEEGEPSVNQVPQEAGASHRVGPYQDQGLATDRNGNPIDLNDSLPPSSLLYGEIESSASVRARDLELEKDIKRVQRLTRNFDNAEDPARRLEVAARLDPEVRELDQKWALFQEKDASGLGR.

Helical transmembrane passes span 15–35, 39–59, and 70–90; these read LFLP…FLGS, AIMI…FGLF, and ILYL…VVYL. The disordered stretch occupies residues 140 to 191; that stretch reads SSKTDMDSQVAEAPQTEEGEPSVNQVPQEAGASHRVGPYQDQGLATDRNGNP.

It localises to the mitochondrion membrane. This is an uncharacterized protein from Arabidopsis thaliana (Mouse-ear cress).